The following is a 593-amino-acid chain: MGSGSSSYRPKAIYLDIDGRIQKVIFSKYCNSSDIMDLFCIATGLPRNTTISLLTTDDAMVSIDPTMPANSERTPYKVRPVAIKQLSAGVEDKRTTSRGQSAERPLRDRRVVGLEQPRREGAFESGQVEPRPREPQGCYQEGQRIPPEREELIQSVLAQVAEQFSRAFKINELKAEVANHLAVLEKRVELEGLKVVEIEKCKSDIKKMREELAARSSRTNCPCKYSFLDNHKKLTPRRDVPTYPKYLLSPETIEALRKPTFDVWLWEPNEMLSCLEHMYHDLGLVRDFSINPVTLRRWLFCVHDNYRNNPFHNFRHCFCVAQMMYSMVWLCSLQEKFSQTDILILMTAAICHDLDHPGYNNTYQINARTELAVRYNDISPLENHHCAVAFQILAEPECNIFSNIPPDGFKQIRQGMITLILATDMARHAEIMDSFKEKMENFDYSNEEHMTLLKMILIKCCDISNEVRPMEVAEPWVDCLLEEYFMQSDREKSEGLPVAPFMDRDKVTKATAQIGFIKFVLIPMFETVTKLFPMVEEIMLQPLWESRDRYEELKRIDDAMKELQKKTDSLTSGATEKSRERSRDVKNSEGDCA.

Residues 87-141 (SAGVEDKRTTSRGQSAERPLRDRRVVGLEQPRREGAFESGQVEPRPREPQGCYQE) form a disordered region. The span at 104-122 (RPLRDRRVVGLEQPRREGA) shows a compositional bias: basic and acidic residues. In terms of domain architecture, PDEase spans 236-557 (PRRDVPTYPK…DRYEELKRID (322 aa)). His-312 (proton donor) is an active-site residue. Residue 312-316 (HNFRH) participates in 3',5'-cyclic GMP binding. 3 residues coordinate Zn(2+): His-316, His-352, and Asp-353. Residue Asp-353 participates in 3',5'-cyclic GMP binding. Asp-353 contacts Mg(2+). Ser-379 is modified (phosphoserine). Residues Asp-462, Tyr-484, and 512–513 (AQ) each bind 3',5'-cyclic GMP. Asp-462 lines the Zn(2+) pocket. The disordered stretch occupies residues 564–593 (QKKTDSLTSGATEKSRERSRDVKNSEGDCA). Residues 576–593 (EKSRERSRDVKNSEGDCA) show a composition bias toward basic and acidic residues.

It belongs to the cyclic nucleotide phosphodiesterase family. PDE9 subfamily. As to quaternary structure, homodimer. It depends on Zn(2+) as a cofactor. The cofactor is Mg(2+). In terms of tissue distribution, expressed in all tissues examined (testis, brain, small intestine, skeletal muscle, heart, lung, thymus, spleen, placenta, kidney, liver, pancreas, ovary and prostate) except blood. Highest levels in brain, heart, kidney, spleen, prostate and colon. Isoform PDE9A12 is found in prostate. In brain, present in the cortex, cerebellum, and subiculum (at protein level). In heart, primarily localizes to myocytes.

It localises to the cell projection. It is found in the ruffle membrane. The protein localises to the cytoplasm. The protein resides in the perinuclear region. Its subcellular location is the golgi apparatus. It localises to the endoplasmic reticulum. It is found in the cell membrane. The protein localises to the sarcolemma. The catalysed reaction is 3',5'-cyclic GMP + H2O = GMP + H(+). Its pathway is purine metabolism; 3',5'-cyclic GMP degradation; GMP from 3',5'-cyclic GMP: step 1/1. With respect to regulation, inhibited by zaprinast; inhibitor is however not specific to PDE9A. Specifically inhibited by BAY-73-6691 (1-(2-chlorophenyl)-6-((2R)-3,3,3- trifluoro-2-methylpropyl)-1,5-dihydro-4H-pyrazolo(3,4-d)pyrimidine-4-one). BAY-73-9961 has two enantiomers, (R) and (S), due to the presence of a chiral center, and both forms vary in their pattern of interaction. Specifically inhibited by PF-4181366 (4H-Pyrazolo[3,4-d]pyrimidin-4-one, 1- cyclopentyl-1,5-dihydro-6-[(3S,4S)-4-methyl- 1-(6-quinoxalinylmethyl)-3-pyrrolidinyl]-one). Specifically inhibited by PF-4449613 ((R)-6-(1-(3-phenoxyazetidin-1-yl)ethyl)-1-(tetrahydro-2H-pyran-4-yl)-1H-pyrazolo[3,4-d]pyrimidin- 4(5H)-one). Specifically inhibited by inhibitor 28 (2-((1-(2-Chlorophenyl)-4-hydroxy-1Hpyrazolo[ 3,4-d]pyrimidin-6-yl)amino)-N-(4- methoxyphenyl)propanamide): inhibitor forms a hydrogen bond with Tyr-484 and Gln-513. Specifically inhibited by 1-Cyclopentyl-6-[(1r)-1-(3-phenoxyazetidin- 1-Yl)ethyl]-1,5-dihydro-4h-pyrazolo[3,4-D] pyrimidin-4-one: inhibitor forms a hydrogen bond with Tyr-484 and Gln-513. Functionally, specifically hydrolyzes the second messenger cGMP, which is a key regulator of many important physiological processes. Highly specific: compared to other members of the cyclic nucleotide phosphodiesterase family, has the highest affinity and selectivity for cGMP. Specifically regulates natriuretic-peptide-dependent cGMP signaling in heart, acting as a regulator of cardiac hypertrophy in myocytes and muscle. Does not regulate nitric oxide-dependent cGMP in heart. Additional experiments are required to confirm whether its ability to hydrolyze natriuretic-peptide-dependent cGMP is specific to heart or is a general feature of the protein. In brain, involved in cognitive function, such as learning and long-term memory. This Homo sapiens (Human) protein is High affinity cGMP-specific 3',5'-cyclic phosphodiesterase 9A.